Reading from the N-terminus, the 340-residue chain is Deubiquitinase SseL (340 aa).

Residue histidine 222 is part of the active site. Cysteine 284 serves as the catalytic Nucleophile.

It belongs to the peptidase C79 family.

Its subcellular location is the secreted. The protein localises to the host cytoplasm. In terms of biological role, effector proteins function to alter host cell physiology and promote bacterial survival in host tissues. This protease targets the host cell ubiquitin pathway by acting as a deubiquitinase in infected host cells. The chain is Deubiquitinase SseL (sseL) from Salmonella arizonae (strain ATCC BAA-731 / CDC346-86 / RSK2980).